We begin with the raw amino-acid sequence, 221 residues long: NAD(P)H-hydrate epimerase (221 aa).

Residues 9–219 (MRELETAAVK…NIGLPKELLS (211 aa)) enclose the YjeF N-terminal domain. 60 to 64 (GNGGD) is a (6S)-NADPHX binding site. Residues N61 and D131 each coordinate K(+). (6S)-NADPHX-binding positions include 135-141 (GIGFKGE), Y146, and D164. S167 lines the K(+) pocket.

Belongs to the NnrE/AIBP family. K(+) serves as cofactor.

It catalyses the reaction (6R)-NADHX = (6S)-NADHX. It carries out the reaction (6R)-NADPHX = (6S)-NADPHX. Its function is as follows. Catalyzes the epimerization of the S- and R-forms of NAD(P)HX, a damaged form of NAD(P)H that is a result of enzymatic or heat-dependent hydration. This is a prerequisite for the S-specific NAD(P)H-hydrate dehydratase to allow the repair of both epimers of NAD(P)HX. In Elusimicrobium minutum (strain Pei191), this protein is NAD(P)H-hydrate epimerase.